Here is a 461-residue protein sequence, read N- to C-terminus: Cysteine--tRNA ligase (461 aa).

C28 contributes to the Zn(2+) binding site. The 'HIGH' region motif lies at 30 to 40 (VTIYDLCHIGH). Zn(2+) is bound by residues C209, H234, and E238. The short motif at 266-270 (KMSKS) is the 'KMSKS' region element. K269 is a binding site for ATP.

The protein belongs to the class-I aminoacyl-tRNA synthetase family. Monomer. Zn(2+) serves as cofactor.

It is found in the cytoplasm. The enzyme catalyses tRNA(Cys) + L-cysteine + ATP = L-cysteinyl-tRNA(Cys) + AMP + diphosphate. The sequence is that of Cysteine--tRNA ligase from Serratia proteamaculans (strain 568).